The following is a 116-amino-acid chain: uncharacterized protein (116 aa).

Residues 1–19 form the signal peptide; sequence MRWDVIILYAISRPYATRR. The disordered stretch occupies residues 18–50; that stretch reads RRTGSHTHPRDSRYIAANQRRPPSACRVGPSPA.

This is an uncharacterized protein from Saccharomyces cerevisiae (strain ATCC 204508 / S288c) (Baker's yeast).